The chain runs to 178 residues: Ribosome maturation factor RimM (178 aa).

A PRC barrel domain is found at 100-173 (ADEYFIHQLY…QIVVRLLPGL (74 aa)).

This sequence belongs to the RimM family. In terms of assembly, binds ribosomal protein uS19.

Its subcellular location is the cytoplasm. In terms of biological role, an accessory protein needed during the final step in the assembly of 30S ribosomal subunit, possibly for assembly of the head region. Essential for efficient processing of 16S rRNA. May be needed both before and after RbfA during the maturation of 16S rRNA. It has affinity for free ribosomal 30S subunits but not for 70S ribosomes. The protein is Ribosome maturation factor RimM of Roseiflexus castenholzii (strain DSM 13941 / HLO8).